We begin with the raw amino-acid sequence, 391 residues long: Phosphoglycerate kinase (391 aa).

Residues 21–23 (DFN), Arg41, 64–67 (HLGR), Arg121, and Arg154 each bind substrate. ATP contacts are provided by residues Lys205, Glu322, and 348–351 (GGDS).

It belongs to the phosphoglycerate kinase family. As to quaternary structure, monomer.

It is found in the cytoplasm. It carries out the reaction (2R)-3-phosphoglycerate + ATP = (2R)-3-phospho-glyceroyl phosphate + ADP. It participates in carbohydrate degradation; glycolysis; pyruvate from D-glyceraldehyde 3-phosphate: step 2/5. This chain is Phosphoglycerate kinase, found in Solibacter usitatus (strain Ellin6076).